Here is a 420-residue protein sequence, read N- to C-terminus: 3-isopropylmalate dehydratase large subunit (420 aa).

The [4Fe-4S] cluster site is built by Cys-300, Cys-361, and Cys-364.

It belongs to the aconitase/IPM isomerase family. LeuC type 2 subfamily. As to quaternary structure, heterodimer of LeuC and LeuD. The cofactor is [4Fe-4S] cluster.

The enzyme catalyses (2R,3S)-3-isopropylmalate = (2S)-2-isopropylmalate. The protein operates within amino-acid biosynthesis; L-leucine biosynthesis; L-leucine from 3-methyl-2-oxobutanoate: step 2/4. Its function is as follows. Catalyzes the isomerization between 2-isopropylmalate and 3-isopropylmalate, via the formation of 2-isopropylmaleate. This is 3-isopropylmalate dehydratase large subunit from Endomicrobium trichonymphae.